Here is a 232-residue protein sequence, read N- to C-terminus: T-cell surface glycoprotein CD1b-3 (232 aa).

At 1–201 (GLQEFQFEYP…LYWGHPMYIG (201 aa)) the chain is on the extracellular side. Disulfide bonds link C19-C83, C48-C62, and C123-C178. N45 is a glycosylation site (N-linked (GlcNAc...) asparagine). An Ig-like domain is found at 84-194 (PRYLLGVLDA…LGDQDIILYW (111 aa)). The chain crosses the membrane as a helical span at residues 202 to 222 (LIFVAIIVPSLILLICLALWF). Residues 223-232 (WRRWSYQTVL) lie on the Cytoplasmic side of the membrane.

As to quaternary structure, heterodimer with B2M (beta-2-microglobulin). Interacts with saposin C.

The protein resides in the cell membrane. It is found in the endosome membrane. It localises to the lysosome membrane. In terms of biological role, antigen-presenting protein that binds self and non-self lipid and glycolipid antigens and presents them to T-cell receptors on natural killer T-cells. This is T-cell surface glycoprotein CD1b-3 from Ovis aries (Sheep).